A 458-amino-acid chain; its full sequence is Mitochondrial-processing peptidase subunit beta (458 aa).

The N-terminal 41 residues, 1-41 (MYRRLASGLYQTSQRRIAQVQPKSVFVPETIVTTLPNGFRV), are a transit peptide targeting the mitochondrion. Position 73 (H73) interacts with Zn(2+). E76 functions as the Proton acceptor in the catalytic mechanism. Residues H77 and E153 each contribute to the Zn(2+) site.

Belongs to the peptidase M16 family. Heterodimer of mppa-1 (alpha) and mppb-1 (beta) subunits, forming the mitochondrial processing protease (MPP) in which mppa-1 is involved in substrate recognition and binding and mppb-1 is the catalytic subunit. Zn(2+) is required as a cofactor.

It is found in the mitochondrion matrix. The enzyme catalyses Release of N-terminal transit peptides from precursor proteins imported into the mitochondrion, typically with Arg in position P2.. With respect to regulation, binding to mppa-1 is required for catalytic activity. Inhibited by metal chelator ethylenediaminetetraacetic acid (EDTA). Functionally, catalytic subunit of the essential mitochondrial processing protease (MPP), which cleaves the mitochondrial sequence off newly imported precursors proteins. Preferentially, cleaves after an arginine at position P2. The protein is Mitochondrial-processing peptidase subunit beta of Caenorhabditis elegans.